We begin with the raw amino-acid sequence, 312 residues long: tRNA uridine(34) hydroxylase (312 aa).

Residues 130 to 225 form the Rhodanese domain; sequence RGDEVVFFDG…YGEQFGNKGL (96 aa). Cysteine 185 serves as the catalytic Cysteine persulfide intermediate.

It belongs to the TrhO family.

It catalyses the reaction uridine(34) in tRNA + AH2 + O2 = 5-hydroxyuridine(34) in tRNA + A + H2O. Functionally, catalyzes oxygen-dependent 5-hydroxyuridine (ho5U) modification at position 34 in tRNAs. This chain is tRNA uridine(34) hydroxylase, found in Corynebacterium glutamicum (strain ATCC 13032 / DSM 20300 / JCM 1318 / BCRC 11384 / CCUG 27702 / LMG 3730 / NBRC 12168 / NCIMB 10025 / NRRL B-2784 / 534).